Consider the following 290-residue polypeptide: Ribosomal RNA small subunit methyltransferase A (290 aa).

6 residues coordinate S-adenosyl-L-methionine: asparagine 28, leucine 30, glycine 55, glutamate 76, aspartate 102, and asparagine 126.

The protein belongs to the class I-like SAM-binding methyltransferase superfamily. rRNA adenine N(6)-methyltransferase family. RsmA subfamily.

Its subcellular location is the cytoplasm. The enzyme catalyses adenosine(1518)/adenosine(1519) in 16S rRNA + 4 S-adenosyl-L-methionine = N(6)-dimethyladenosine(1518)/N(6)-dimethyladenosine(1519) in 16S rRNA + 4 S-adenosyl-L-homocysteine + 4 H(+). Its function is as follows. Specifically dimethylates two adjacent adenosines (A1518 and A1519) in the loop of a conserved hairpin near the 3'-end of 16S rRNA in the 30S particle. May play a critical role in biogenesis of 30S subunits. The protein is Ribosomal RNA small subunit methyltransferase A of Lachnoclostridium phytofermentans (strain ATCC 700394 / DSM 18823 / ISDg) (Clostridium phytofermentans).